Here is a 149-residue protein sequence, read N- to C-terminus: Low molecular weight protein-tyrosine-phosphatase Wzb (149 aa).

Cys9 acts as the Nucleophile in catalysis. Arg15 is an active-site residue. Asp115 serves as the catalytic Proton donor.

Belongs to the low molecular weight phosphotyrosine protein phosphatase family.

It catalyses the reaction O-phospho-L-tyrosyl-[protein] + H2O = L-tyrosyl-[protein] + phosphate. Its pathway is glycan metabolism; exopolysaccharide biosynthesis. Functionally, dephosphorylates Wzc. Required for the extracellular polysaccharide colanic acid synthesis. Probably involved in the export of colanic acid from the cell to medium. Involved in protection of cells against contact-dependent growth inhibition (CDI). The polypeptide is Low molecular weight protein-tyrosine-phosphatase Wzb (wzb) (Salmonella typhimurium (strain LT2 / SGSC1412 / ATCC 700720)).